The chain runs to 428 residues: Exodeoxyribonuclease 7 large subunit (428 aa).

It belongs to the XseA family. In terms of assembly, heterooligomer composed of large and small subunits.

It localises to the cytoplasm. It carries out the reaction Exonucleolytic cleavage in either 5'- to 3'- or 3'- to 5'-direction to yield nucleoside 5'-phosphates.. Bidirectionally degrades single-stranded DNA into large acid-insoluble oligonucleotides, which are then degraded further into small acid-soluble oligonucleotides. The protein is Exodeoxyribonuclease 7 large subunit of Mycobacterium leprae (strain TN).